A 115-amino-acid chain; its full sequence is U3-lycotoxin-Ls1s (115 aa).

Positions 1–20 are cleaved as a signal peptide; it reads MKFVLLFGVFLLTLFSYSSS. The propeptide occupies 21-44; the sequence is EMLDDFDQADEDELLSLIEKEEAR. Intrachain disulfides connect Cys48–Cys63, Cys55–Cys72, Cys62–Cys87, and Cys74–Cys85.

It belongs to the neurotoxin 19 (CSTX) family. 01 subfamily. As to expression, expressed by the venom gland.

The protein localises to the secreted. This is U3-lycotoxin-Ls1s from Lycosa singoriensis (Wolf spider).